We begin with the raw amino-acid sequence, 558 residues long: DALR anticodon-binding domain-containing protein 3 (558 aa).

Residues 213–240 (KALENSAYRDRETEKGKRRSRGEEIEGE) are disordered.

This is DALR anticodon-binding domain-containing protein 3 (dalrd3) from Danio rerio (Zebrafish).